The sequence spans 618 residues: 1-deoxy-D-xylulose-5-phosphate synthase (618 aa).

Thiamine diphosphate is bound by residues histidine 76 and 117 to 119; that span reads GHS. Aspartate 148 contributes to the Mg(2+) binding site. Residues 149 to 150, asparagine 177, tyrosine 284, and glutamate 366 each bind thiamine diphosphate; that span reads GA. Asparagine 177 contributes to the Mg(2+) binding site.

Belongs to the transketolase family. DXPS subfamily. In terms of assembly, homodimer. The cofactor is Mg(2+). Thiamine diphosphate serves as cofactor.

The catalysed reaction is D-glyceraldehyde 3-phosphate + pyruvate + H(+) = 1-deoxy-D-xylulose 5-phosphate + CO2. It participates in metabolic intermediate biosynthesis; 1-deoxy-D-xylulose 5-phosphate biosynthesis; 1-deoxy-D-xylulose 5-phosphate from D-glyceraldehyde 3-phosphate and pyruvate: step 1/1. Catalyzes the acyloin condensation reaction between C atoms 2 and 3 of pyruvate and glyceraldehyde 3-phosphate to yield 1-deoxy-D-xylulose-5-phosphate (DXP). This Dechloromonas aromatica (strain RCB) protein is 1-deoxy-D-xylulose-5-phosphate synthase.